We begin with the raw amino-acid sequence, 339 residues long: Deoxyguanosinetriphosphate triphosphohydrolase-like protein (339 aa).

The 112-residue stretch at 75–186 (RLTHTLEVAQ…VQISDKIAYI (112 aa)) folds into the HD domain.

It belongs to the dGTPase family. Type 2 subfamily.

In Caldanaerobacter subterraneus subsp. tengcongensis (strain DSM 15242 / JCM 11007 / NBRC 100824 / MB4) (Thermoanaerobacter tengcongensis), this protein is Deoxyguanosinetriphosphate triphosphohydrolase-like protein.